A 141-amino-acid polypeptide reads, in one-letter code: Superoxide dismutase [Cu-Zn], chloroplastic (141 aa).

3 residues coordinate Cu cation: His-33, His-35, and His-50. A disulfide bond links Cys-44 and Cys-133. Residues His-50, His-58, His-67, and Asp-70 each contribute to the Zn(2+) site. His-107 is a Cu cation binding site.

It belongs to the Cu-Zn superoxide dismutase family. As to quaternary structure, homotetramer. Requires Cu cation as cofactor. Zn(2+) serves as cofactor.

The protein resides in the plastid. The protein localises to the chloroplast. It carries out the reaction 2 superoxide + 2 H(+) = H2O2 + O2. Its function is as follows. Destroys radicals which are normally produced within the cells and which are toxic to biological systems. The protein is Superoxide dismutase [Cu-Zn], chloroplastic (SODCP) of Pinus sylvestris (Scotch pine).